A 246-amino-acid chain; its full sequence is Small ribosomal subunit protein uS3 (246 aa).

The KH type-2 domain maps to 23–94; that stretch reads LNEFLTRELA…RIELYAEKVA (72 aa). Residues 201–246 are disordered; it reads GPKKPLPDNVSVVEPKEEKIYETPETEYKIPPPSKPLDDLSEAKVL. Composition is skewed to basic and acidic residues over residues 214–228 and 236–246; these read EPKE…ETEY and PLDDLSEAKVL. 2 positions are modified to phosphothreonine: Thr223 and Thr226. Ser241 is subject to Phosphoserine.

This sequence belongs to the universal ribosomal protein uS3 family. In terms of assembly, interacts with LTV1; the interaction is RNA-independent.

The protein localises to the cytoplasm. It localises to the nucleus. In terms of biological role, has DNA repair activity directed towards the mutagenic lesions 8-oxoguanine and abasic sites in DNA. It can cleave DNA containing 8-oxoguanine residues efficiently. Also acts as an ap lyase, cleaving phosphodiester bonds via a beta,delta elimination reaction. This chain is Small ribosomal subunit protein uS3 (RpS3), found in Drosophila melanogaster (Fruit fly).